We begin with the raw amino-acid sequence, 970 residues long: Phosphoenolpyruvate carboxylase 1 (970 aa).

Ser15 is subject to Phosphoserine. Residues His177, Lys606, and Arg647 contribute to the active site.

It belongs to the PEPCase type 1 family. As to quaternary structure, homotetramer. It depends on Mg(2+) as a cofactor.

It localises to the cytoplasm. The enzyme catalyses oxaloacetate + phosphate = phosphoenolpyruvate + hydrogencarbonate. It functions in the pathway photosynthesis; C4 acid pathway. With respect to regulation, by light-reversible phosphorylation. In terms of biological role, through the carboxylation of phosphoenolpyruvate (PEP) it forms oxaloacetate, a four-carbon dicarboxylic acid source for the tricarboxylic acid cycle. This chain is Phosphoenolpyruvate carboxylase 1 (PEP1), found in Zea mays (Maize).